Reading from the N-terminus, the 489-residue chain is Mitochondrial distribution and morphology protein 10 (489 aa).

Belongs to the MDM10 family. Component of the ER-mitochondria encounter structure (ERMES) or MDM complex, composed of MMM1, MDM10, MDM12 and MDM34. Associates with the mitochondrial outer membrane sorting assembly machinery SAM(core) complex.

The protein resides in the mitochondrion outer membrane. Its function is as follows. Component of the ERMES/MDM complex, which serves as a molecular tether to connect the endoplasmic reticulum and mitochondria. Components of this complex are involved in the control of mitochondrial shape and protein biogenesis and may function in phospholipid exchange. MDM10 is involved in the late assembly steps of the general translocase of the mitochondrial outer membrane (TOM complex). Functions in the TOM40-specific route of the assembly of outer membrane beta-barrel proteins, including the association of TOM40 with the receptor TOM22 and small TOM proteins. Can associate with the SAM(core) complex as well as the MDM12-MMM1 complex, both involved in late steps of the major beta-barrel assembly pathway, that is responsible for biogenesis of all outer membrane beta-barrel proteins. May act as a switch that shuttles between both complexes and channels precursor proteins into the TOM40-specific pathway. Plays a role in mitochondrial morphology and in the inheritance of mitochondria. The protein is Mitochondrial distribution and morphology protein 10 of Arthroderma otae (strain ATCC MYA-4605 / CBS 113480) (Microsporum canis).